A 547-amino-acid chain; its full sequence is MSTYGTLLKVTSFGESHGKAIGCVIDGFLPNVEINFDLIQRQLNRRRPNQSKLTSNRNEPDKLIVLSGFDENKTLGTPITFLINNEDVIKKNYSSFIDIPRPGHGDYTYFKKYNVKNKSGSSRFSGRETATRVAAGACIEQWLHTFYNCTIVCYVHSVGNIKLPEQVSKDFERNPPSRDLVDAHGAVKYHQGRGTFTDFFGNVYNANGEFLRGGEAAPEGATPADGTPTDGNPTDDPLANARERLSDPGECTLLQTRCPHPLTAVKICSYILKLKKAGDSIGGVATCIAHNVPVGIGEPIFEKMEAELGKIILSIPAVKGIEFGSGFDGTYMLGSDHNDLFGTLDVPEEGPCQRGWTLTDALDSKRGEVTPGGSRAQEGTSFEKDACHRSGHLSNLSGYPSNGSGNPPNGSDHPSNRSGNPPNRSDPRVDESTRETSPPSGEKLLVTTSNNCGGILAGITTGNNIVFRSAIKPVSSIQIEKETCNFFGEKCKLKVTGMHDCCILPRLPPIIEASTSIVIGDMILRQVAKYGHSKLPSVGSLSRSTRE.

Active-site residues include His17, His104, and Asp500.

Belongs to the chorismate synthase family.

The protein localises to the cytoplasm. The protein resides in the cytosol. It catalyses the reaction 5-O-(1-carboxyvinyl)-3-phosphoshikimate = chorismate + phosphate. The enzyme catalyses FMNH2 + NADP(+) = FMN + NADPH + 2 H(+). The protein operates within metabolic intermediate biosynthesis; chorismate biosynthesis; chorismate from D-erythrose 4-phosphate and phosphoenolpyruvate: step 7/7. In terms of biological role, bifunctional chorismate synthase and flavin reductase. Catalyzes the conversion of 5-enolpyruvylshikimate 3-phosphate (EPSP) to form chorismate. Acts also as a flavin reductase (FR) able to generate reduced flavin mononucleotide in the presence of NADPH. This Plasmodium vivax (strain Salvador I) protein is Chorismate synthase.